A 611-amino-acid polypeptide reads, in one-letter code: Leukotriene A-4 hydrolase (611 aa).

Lysine 73 bears the N6-acetyllysine mark. A peptide is bound by residues 135-137 (QCQ) and 267-272 (PYGGME). Histidine 296 is a binding site for Zn(2+). The Proton acceptor role is filled by glutamate 297. Residues histidine 300 and glutamate 319 each coordinate Zn(2+). N6-acetyllysine is present on lysine 337. The active-site Proton donor is tyrosine 384. At serine 416 the chain carries Phosphoserine. Position 564–566 (564–566 (RMK)) interacts with a peptide. The residue at position 573 (lysine 573) is an N6-acetyllysine.

It belongs to the peptidase M1 family. It depends on Zn(2+) as a cofactor. Phosphorylation at Ser-416 inhibits enzymatic activity.

The protein localises to the cytoplasm. The enzyme catalyses leukotriene A4 + H2O = leukotriene B4. It functions in the pathway lipid metabolism; leukotriene B4 biosynthesis. With respect to regulation, inhibited by bestatin. Subject to suicide inhibition by leukotriene A4. Its function is as follows. Epoxide hydrolase that catalyzes the final step in the biosynthesis of the pro-inflammatory mediator leukotriene B4. Also has aminopeptidase activity. This chain is Leukotriene A-4 hydrolase (LTA4H), found in Chinchilla lanigera (Long-tailed chinchilla).